Consider the following 195-residue polypeptide: ATP-dependent Clp protease proteolytic subunit (195 aa).

Residue Ser-99 is the Nucleophile of the active site. Residue His-124 is part of the active site.

The protein belongs to the peptidase S14 family. As to quaternary structure, fourteen ClpP subunits assemble into 2 heptameric rings which stack back to back to give a disk-like structure with a central cavity, resembling the structure of eukaryotic proteasomes.

It is found in the cytoplasm. The catalysed reaction is Hydrolysis of proteins to small peptides in the presence of ATP and magnesium. alpha-casein is the usual test substrate. In the absence of ATP, only oligopeptides shorter than five residues are hydrolyzed (such as succinyl-Leu-Tyr-|-NHMec, and Leu-Tyr-Leu-|-Tyr-Trp, in which cleavage of the -Tyr-|-Leu- and -Tyr-|-Trp bonds also occurs).. Cleaves peptides in various proteins in a process that requires ATP hydrolysis. Has a chymotrypsin-like activity. Plays a major role in the degradation of misfolded proteins. The sequence is that of ATP-dependent Clp protease proteolytic subunit from Carboxydothermus hydrogenoformans (strain ATCC BAA-161 / DSM 6008 / Z-2901).